The sequence spans 313 residues: 4-diphosphocytidyl-2-C-methyl-D-erythritol kinase (313 aa).

The active site involves Lys10. 95–105 is an ATP binding site; the sequence is PVTAGLGGGSS. Asp136 is an active-site residue. The interval 289–313 is disordered; that stretch reads HPRVSPWRSPRSASSRSTRRSSRPT. The segment covering 292 to 304 has biased composition (low complexity); it reads VSPWRSPRSASSR.

Belongs to the GHMP kinase family. IspE subfamily.

The enzyme catalyses 4-CDP-2-C-methyl-D-erythritol + ATP = 4-CDP-2-C-methyl-D-erythritol 2-phosphate + ADP + H(+). It participates in isoprenoid biosynthesis; isopentenyl diphosphate biosynthesis via DXP pathway; isopentenyl diphosphate from 1-deoxy-D-xylulose 5-phosphate: step 3/6. In terms of biological role, catalyzes the phosphorylation of the position 2 hydroxy group of 4-diphosphocytidyl-2C-methyl-D-erythritol. This is 4-diphosphocytidyl-2-C-methyl-D-erythritol kinase from Anaeromyxobacter dehalogenans (strain 2CP-1 / ATCC BAA-258).